The primary structure comprises 131 residues: uncharacterized protein (131 aa).

The protein resides in the mitochondrion. This is an uncharacterized protein from Arabidopsis thaliana (Mouse-ear cress).